A 336-amino-acid chain; its full sequence is Flap endonuclease 1 (336 aa).

The N-domain stretch occupies residues 1 to 98 (MGVDLGDILS…GTLAARAQMK (98 aa)). 7 residues coordinate Mg(2+): Asp-27, Asp-80, Glu-150, Glu-152, Asp-171, Asp-173, and Asp-234. The tract at residues 114–255 (DSFRYAQATA…RALKLIREHG (142 aa)) is I-domain. An interaction with PCNA region spans residues 328–336 (GQSTLERWL).

The protein belongs to the XPG/RAD2 endonuclease family. FEN1 subfamily. Interacts with PCNA. PCNA stimulates the nuclease activity without altering cleavage specificity. It depends on Mg(2+) as a cofactor.

In terms of biological role, structure-specific nuclease with 5'-flap endonuclease and 5'-3' exonuclease activities involved in DNA replication and repair. During DNA replication, cleaves the 5'-overhanging flap structure that is generated by displacement synthesis when DNA polymerase encounters the 5'-end of a downstream Okazaki fragment. Binds the unpaired 3'-DNA end and kinks the DNA to facilitate 5' cleavage specificity. Cleaves one nucleotide into the double-stranded DNA from the junction in flap DNA, leaving a nick for ligation. Also involved in the base excision repair (BER) pathway. Acts as a genome stabilization factor that prevents flaps from equilibrating into structures that lead to duplications and deletions. Also possesses 5'-3' exonuclease activity on nicked or gapped double-stranded DNA. The chain is Flap endonuclease 1 from Methanothrix thermoacetophila (strain DSM 6194 / JCM 14653 / NBRC 101360 / PT) (Methanosaeta thermophila).